A 315-amino-acid chain; its full sequence is Melanocyte-stimulating hormone receptor (315 aa).

The Extracellular portion of the chain corresponds to 1–35 (MSTQEPQKSLLGSLNSNATSHLGLATNQSEPWCLY). N-linked (GlcNAc...) asparagine glycosylation is found at N17 and N27. The helical transmembrane segment at 36–61 (VSIPDGLFLSLGLVSLVENVLVVIAI) threads the bilayer. The Cytoplasmic portion of the chain corresponds to 62–70 (TKNRNLHSP). A helical membrane pass occupies residues 71–91 (MYYFICCLALSDLMVSVSIVL). The Extracellular portion of the chain corresponds to 92-116 (ETTIILLLEAGILVARVALVQQLDN). The helical transmembrane segment at 117–138 (LIDVLICGSMVSSLCFLGIIAI) threads the bilayer. The Cytoplasmic portion of the chain corresponds to 139 to 161 (DRYISIFYALRYHSIVTLPRARR). The helical transmembrane segment at 162–181 (AVVGIWMVSIVSSTLFITYY) threads the bilayer. Topologically, residues 182-189 (KHTAVLLC) are extracellular. The chain crosses the membrane as a helical span at residues 190-209 (LVTFFLAMLALMAILYAHMF). The Cytoplasmic segment spans residues 210 to 238 (TRACQHAQGIAQLHKRRRSIRQGFCLKGA). The chain crosses the membrane as a helical span at residues 239-264 (ATLTILLGIFFLCWGPFFLHLLLIVL). At 265 to 277 (CPQHPTCSCIFKN) the chain is on the extracellular side. The chain crosses the membrane as a helical span at residues 278–298 (FNLFLLLIVLSSTVDPLIYAF). Residues 299-315 (RSQELRMTLKEVLLCSW) are Cytoplasmic-facing. C313 is lipidated: S-palmitoyl cysteine.

It belongs to the G-protein coupled receptor 1 family. In terms of assembly, interacts with MGRN1, but does not undergo MGRN1-mediated ubiquitination; this interaction competes with GNAS-binding and thus inhibits agonist-induced cAMP production. Interacts with OPN3; the interaction results in a decrease in MC1R-mediated cAMP signaling and ultimately a decrease in melanin production in melanocytes.

The protein localises to the cell membrane. In terms of biological role, receptor for MSH (alpha, beta and gamma) and ACTH. The activity of this receptor is mediated by G proteins which activate adenylate cyclase. Mediates melanogenesis, the production of eumelanin (black/brown) and phaeomelanin (red/yellow), via regulation of cAMP signaling in melanocytes. This Mus musculus (Mouse) protein is Melanocyte-stimulating hormone receptor (Mc1r).